The primary structure comprises 270 residues: Type III pantothenate kinase (270 aa).

6–13 (DAGNTNIV) is an ATP binding site. A substrate-binding site is contributed by 107–110 (GADR). The active-site Proton acceptor is the D109. D129 lines the K(+) pocket. T132 contributes to the ATP binding site. Residue T184 participates in substrate binding.

Belongs to the type III pantothenate kinase family. Homodimer. The cofactor is NH4(+). K(+) serves as cofactor.

Its subcellular location is the cytoplasm. It carries out the reaction (R)-pantothenate + ATP = (R)-4'-phosphopantothenate + ADP + H(+). It functions in the pathway cofactor biosynthesis; coenzyme A biosynthesis; CoA from (R)-pantothenate: step 1/5. Its function is as follows. Catalyzes the phosphorylation of pantothenate (Pan), the first step in CoA biosynthesis. The polypeptide is Type III pantothenate kinase (Gluconobacter oxydans (strain 621H) (Gluconobacter suboxydans)).